A 211-amino-acid chain; its full sequence is Large ribosomal subunit protein uL3 (211 aa).

A disordered region spans residues 122-147 (AIKRHGQSRGPMAHGSRYHRRPGSMG).

This sequence belongs to the universal ribosomal protein uL3 family. In terms of assembly, part of the 50S ribosomal subunit. Forms a cluster with proteins L14 and L19.

In terms of biological role, one of the primary rRNA binding proteins, it binds directly near the 3'-end of the 23S rRNA, where it nucleates assembly of the 50S subunit. The chain is Large ribosomal subunit protein uL3 from Geobacillus sp. (strain WCH70).